The primary structure comprises 303 residues: Probable 5-dehydro-4-deoxyglucarate dehydratase (303 aa).

Belongs to the DapA family.

It catalyses the reaction 5-dehydro-4-deoxy-D-glucarate + H(+) = 2,5-dioxopentanoate + CO2 + H2O. Its pathway is carbohydrate acid metabolism; D-glucarate degradation; 2,5-dioxopentanoate from D-glucarate: step 2/2. The protein is Probable 5-dehydro-4-deoxyglucarate dehydratase of Pseudomonas fluorescens (strain Pf0-1).